We begin with the raw amino-acid sequence, 24 residues long: 29 kDa outer membrane protein (24 aa).

It localises to the cell outer membrane. Functionally, may be involved in transporting molecules across the outer membrane. This is 29 kDa outer membrane protein from Acinetobacter baumannii.